A 550-amino-acid polypeptide reads, in one-letter code: Metal transporter Nramp3 (550 aa).

A compositionally biased stretch (polar residues) spans 1–26 (MSGPMQRSSQPQFISSVERNNQSNGP). The tract at residues 1-30 (MSGPMQRSSQPQFISSVERNNQSNGPGTPL) is disordered. The next 12 helical transmembrane spans lie at 50-70 (LFSYIGPGFLVSIAYIDPGNF), 83-103 (ELLWIILIASCAALIIQSLAA), 127-147 (FILWILAELAVVACDIPEVIG), 158-178 (IPVWCGVLITGLSTLMLLLLQ), 185-205 (LEFLIAILVSLIATCFLVELG), 233-253 (ISLLGAMVMPHNLFLHSALVL), 276-296 (AFALTIAFLINISIISVSGAV), 333-353 (LFAVALLASGQSSTITGTYAG), 368-390 (WIRNLLTRSLAILPSLIVSIIGG), 397-417 (LIIIASMILSFELPFALVPLL), 435-455 (ISVITWGIGSFIVVINTYFLI), and 473-493 (VFSGIFGFLGMLIYMAAILYL). The tract at residues 523-550 (GEGSLGHLPREDISSMQLPQQRTASDLD) is disordered. Positions 536-550 (SSMQLPQQRTASDLD) are enriched in polar residues.

Belongs to the NRAMP (TC 2.A.55) family.

The protein localises to the membrane. Its function is as follows. Probable metal transporter. In Oryza sativa subsp. japonica (Rice), this protein is Metal transporter Nramp3 (NRAMP3).